Consider the following 507-residue polypeptide: ATP synthase subunit alpha (507 aa).

168–175 (GDRQTGKT) contributes to the ATP binding site.

This sequence belongs to the ATPase alpha/beta chains family. As to quaternary structure, F-type ATPases have 2 components, CF(1) - the catalytic core - and CF(0) - the membrane proton channel. CF(1) has five subunits: alpha(3), beta(3), gamma(1), delta(1), epsilon(1). CF(0) has three main subunits: a(1), b(2) and c(9-12). The alpha and beta chains form an alternating ring which encloses part of the gamma chain. CF(1) is attached to CF(0) by a central stalk formed by the gamma and epsilon chains, while a peripheral stalk is formed by the delta and b chains.

The protein resides in the cell membrane. It catalyses the reaction ATP + H2O + 4 H(+)(in) = ADP + phosphate + 5 H(+)(out). Its function is as follows. Produces ATP from ADP in the presence of a proton gradient across the membrane. The alpha chain is a regulatory subunit. This chain is ATP synthase subunit alpha, found in Mesomycoplasma hyopneumoniae (strain 7448) (Mycoplasma hyopneumoniae).